We begin with the raw amino-acid sequence, 122 residues long: Large ribosomal subunit protein uL14 (122 aa).

Belongs to the universal ribosomal protein uL14 family. As to quaternary structure, part of the 50S ribosomal subunit. Forms a cluster with proteins L3 and L19. In the 70S ribosome, L14 and L19 interact and together make contacts with the 16S rRNA in bridges B5 and B8.

In terms of biological role, binds to 23S rRNA. Forms part of two intersubunit bridges in the 70S ribosome. The polypeptide is Large ribosomal subunit protein uL14 (Verminephrobacter eiseniae (strain EF01-2)).